The following is a 273-amino-acid chain: Glucosamine-6-phosphate deaminase (273 aa).

D72 functions as the Proton acceptor; for enolization step in the catalytic mechanism. Residue D141 is the For ring-opening step of the active site. H143 acts as the Proton acceptor; for ring-opening step in catalysis. The For ring-opening step role is filled by E148.

This sequence belongs to the glucosamine/galactosamine-6-phosphate isomerase family. Homohexamer.

The protein resides in the cytoplasm. It catalyses the reaction alpha-D-glucosamine 6-phosphate + H2O = beta-D-fructose 6-phosphate + NH4(+). It participates in nucleotide-sugar biosynthesis; UDP-N-acetyl-alpha-D-glucosamine biosynthesis; alpha-D-glucosamine 6-phosphate from D-fructose 6-phosphate: step 1/1. Its function is as follows. Catalyzes the reversible conversion of alpha-D-glucosamine 6-phosphate (GlcN-6P) into beta-D-fructose 6-phosphate (Fru-6P) and ammonium ion, a regulatory reaction step in de novo uridine diphosphate-N-acetyl-alpha-D-glucosamine (UDP-GlcNAc) biosynthesis via hexosamine pathway. The protein is Glucosamine-6-phosphate deaminase (Gnpda1) of Anopheles gambiae (African malaria mosquito).